Here is a 506-residue protein sequence, read N- to C-terminus: Sodium transporter HKT1 (506 aa).

The Cytoplasmic segment spans residues 1–19; the sequence is MDRVVAKIAKIRSQLTKLR. The helical transmembrane segment at 20–40 threads the bilayer; sequence SLFFLYFIYFLFFSFLGFLAL. Residues 41 to 81 are Extracellular-facing; sequence KITKPRTTSRPHDFDLFFTSVSAITVSSMSTVDMEVFSNTQ. A helical membrane pass occupies residues 82-102; sequence LIFLTILMFLGGEIFTSFLNL. Over 103–159 the chain is Cytoplasmic; sequence YVSYFTKFVFPHNKIRHILGSYNSDSSIEDRCDVETVTDYREGLIKIDERASKCLYS. A helical membrane pass occupies residues 160-180; sequence VVLSYHLVTNLVGSVLLLVYV. At 181 to 232 the chain is on the extracellular side; sequence NFVKTARDVLSSKEISPLTFSVFTTVSTFANCGFVPTNENMIIFRKNSGLIW. The chain crosses the membrane as a helical span at residues 233–253; the sequence is LLIPQVLMGNTLFPCFLVLLI. Over 254-286 the chain is Cytoplasmic; that stretch reads WGLYKITKRDEYGYILKNHNKMGYSHLLSVRLC. The chain crosses the membrane as a helical span at residues 287–307; that stretch reads VLLGVTVLGFLIIQLLFFCAF. Over 308–348 the chain is Extracellular; it reads EWTSESLEGMSSYEKLVGSLFQVVNSRHTGETIVDLSTLSP. Residues 349–369 form a helical membrane-spanning segment; the sequence is AILVLFILMMYLPPYTLFMPL. Topologically, residues 370–392 are cytoplasmic; that stretch reads TEQKTIEKEGGDDDSENGKKVKK. A helical membrane pass occupies residues 393–413; the sequence is SGLIVSQLSFLTICIFLISIT. Over 414 to 465 the chain is Extracellular; sequence ERQNLQRDPINFNVLNITLEVISAYGNVGFTTGYSCERRVDISDGGCKDASY. The N-linked (GlcNAc...) asparagine glycan is linked to Asn429. Residues 466–486 traverse the membrane as a helical segment; it reads GFAGRWSPMGKFVLIIVMFYG. The Cytoplasmic segment spans residues 487-506; sequence RFKQFTAKSGRAWILYPSSS.

It belongs to the TrkH potassium transport family. HKT (TC 2.A.38.3) subfamily. Post-translationally, N-glycosylated. Not essential for functional expression and membrane targeting. In terms of tissue distribution, highly expressed in roots. Expressed in flowers, leaves and stems. Expressed in the vascular tissues of every organs. In roots, leaves and flower peduncles, it is only expressed in the phloem tissues. Not expressed in root peripheral cells.

The protein resides in the cell membrane. It catalyses the reaction Na(+)(in) = Na(+)(out). Its function is as follows. Sodium transporter protein, which plays a central role in plant tolerance to salt. Upon prolongated exposure to high concentrations, Na(+) translocates from the roots to the transpiring leaves where it can increase to toxic level. Involved in Na(+) recirculation from shoots to roots, probably by mediating Na(+) loading into the phloem sap in shoots and unloading in roots, thereby removing large amounts of Na(+) from the shoot. Does not transport K(+) but regulates K(+) nutrient status via its ability to facilitate Na(+) homeostasis. Probably not involved in root uptake of Na(+). The protein is Sodium transporter HKT1 (HKT1) of Arabidopsis thaliana (Mouse-ear cress).